The primary structure comprises 329 residues: Protein phosphatase 1 regulatory subunit 42 (329 aa).

LRR repeat units follow at residues 30 to 51 (KLTHLNFSDKNIEEIDDLSVCR), 52 to 73 (NLTVLYLYDNQISQICNLGFAS), 74 to 95 (NLTHLYMQNNNISCIENLSSLH), 96 to 117 (KLSKLFLGGNSITVVEGLEELK), 118 to 139 (SLKELHVEGQKLPCGEKLAFDP), 148 to 169 (TLCILNISKNNIDELWDLAPLR), and 170 to 191 (KMTHLFAADNQLHDIQELETVF). Residues 205-243 (NPVCHKPKYRDRLITVCKFLDDLDGKQINELSRQFLINW) enclose the LRRCT domain. The tract at residues 268–329 (STSADFHLGP…SSTEWQSLKI (62 aa)) is disordered. Polar residues predominate over residues 318–329 (GDSSTEWQSLKI).

It is found in the cytoplasm. Its subcellular location is the cytoskeleton. It localises to the microtubule organizing center. The protein resides in the centrosome. Its function is as follows. May regulate phosphatase activity of protein phosphatase 1 (PP1) complexes. The polypeptide is Protein phosphatase 1 regulatory subunit 42 (ppp1r42) (Danio rerio (Zebrafish)).